The following is a 209-amino-acid chain: Protein-L-isoaspartate O-methyltransferase (209 aa).

Ser-60 is a catalytic residue.

This sequence belongs to the methyltransferase superfamily. L-isoaspartyl/D-aspartyl protein methyltransferase family.

Its subcellular location is the cytoplasm. It catalyses the reaction [protein]-L-isoaspartate + S-adenosyl-L-methionine = [protein]-L-isoaspartate alpha-methyl ester + S-adenosyl-L-homocysteine. In terms of biological role, catalyzes the methyl esterification of L-isoaspartyl residues in peptides and proteins that result from spontaneous decomposition of normal L-aspartyl and L-asparaginyl residues. It plays a role in the repair and/or degradation of damaged proteins. The polypeptide is Protein-L-isoaspartate O-methyltransferase (Photobacterium profundum (strain SS9)).